Consider the following 194-residue polypeptide: RNA pyrophosphohydrolase (194 aa).

The 144-residue stretch at 6–149 (GFRPNVGIIL…KRDVYQRALQ (144 aa)) folds into the Nudix hydrolase domain. Positions 38-59 (GGIKFGETPEQAMYRELEEEVG) match the Nudix box motif. The disordered stretch occupies residues 158-194 (PTQHVPPQHNTARYLRQTHASRKPDEPSTEKTKPDNE). The span at 179–194 (RKPDEPSTEKTKPDNE) shows a compositional bias: basic and acidic residues.

This sequence belongs to the Nudix hydrolase family. RppH subfamily. It depends on a divalent metal cation as a cofactor.

Functionally, accelerates the degradation of transcripts by removing pyrophosphate from the 5'-end of triphosphorylated RNA, leading to a more labile monophosphorylated state that can stimulate subsequent ribonuclease cleavage. In Janthinobacterium sp. (strain Marseille) (Minibacterium massiliensis), this protein is RNA pyrophosphohydrolase.